Here is a 128-residue protein sequence, read N- to C-terminus: Fluoride-specific ion channel FluC (128 aa).

A run of 4 helical transmembrane segments spans residues 5–25 (IVAIFVGAGLGAVLRWFLGLA), 35–55 (LGTLAANLLGGYAIGIAAVVF), 67–87 (LFVITGFLGGLTTFSTYSVEV), and 96–116 (FGWAFAVAVLHLTGSFTLTAL). Na(+)-binding residues include Gly-75 and Thr-78.

The protein belongs to the fluoride channel Fluc/FEX (TC 1.A.43) family.

It localises to the cell inner membrane. It carries out the reaction fluoride(in) = fluoride(out). With respect to regulation, na(+) is not transported, but it plays an essential structural role and its presence is essential for fluoride channel function. Fluoride-specific ion channel. Important for reducing fluoride concentration in the cell, thus reducing its toxicity. The sequence is that of Fluoride-specific ion channel FluC from Burkholderia vietnamiensis (strain G4 / LMG 22486) (Burkholderia cepacia (strain R1808)).